Reading from the N-terminus, the 232-residue chain is Two-component response regulator ORR4 (232 aa).

Residues 11–147 enclose the Response regulatory domain; it reads HVLAVDDSLI…DMKKLKSHLL (137 aa). Residue D80 is modified to 4-aspartylphosphate. Disordered stretches follow at residues 153–174 and 202–232; these read LPMA…AASA and AAAM…AVET. A compositionally biased stretch (polar residues) spans 209-232; that stretch reads VISSPDQRTKPRLSSTSSGLAVET.

The protein belongs to the ARR family. Type-A subfamily. Two-component system major event consists of a His-to-Asp phosphorelay between a sensor histidine kinase (HK) and a response regulator (RR). In plants, the His-to-Asp phosphorelay involves an additional intermediate named Histidine-containing phosphotransfer protein (HPt). This multistep phosphorelay consists of a His-Asp-His-Asp sequential transfer of a phosphate group between first a His and an Asp of the HK protein, followed by the transfer to a conserved His of the HPt protein and finally the transfer to an Asp in the receiver domain of the RR protein. As to expression, expressed in mature leaves and flowers, and at low levels in roots and shoots.

Functionally, functions as a response regulator involved in His-to-Asp phosphorelay signal transduction system. Phosphorylation of the Asp residue in the receiver domain activates the ability of the protein to promote the transcription of target genes. Type-A response regulators seem to act as negative regulators of the cytokinin signaling. The protein is Two-component response regulator ORR4 of Oryza sativa subsp. indica (Rice).